A 409-amino-acid chain; its full sequence is Argininosuccinate synthase (409 aa).

ATP contacts are provided by residues 10–18 (AYSGGLDTS) and alanine 37. Tyrosine 90 and serine 95 together coordinate L-citrulline. Residue glycine 120 participates in ATP binding. L-aspartate-binding residues include threonine 122, asparagine 126, and aspartate 127. Asparagine 126 serves as a coordination point for L-citrulline. L-citrulline contacts are provided by arginine 130, serine 182, serine 191, glutamate 267, and tyrosine 279.

The protein belongs to the argininosuccinate synthase family. Type 1 subfamily. Homotetramer.

It is found in the cytoplasm. The enzyme catalyses L-citrulline + L-aspartate + ATP = 2-(N(omega)-L-arginino)succinate + AMP + diphosphate + H(+). It participates in amino-acid biosynthesis; L-arginine biosynthesis; L-arginine from L-ornithine and carbamoyl phosphate: step 2/3. The chain is Argininosuccinate synthase from Aromatoleum aromaticum (strain DSM 19018 / LMG 30748 / EbN1) (Azoarcus sp. (strain EbN1)).